Here is a 157-residue protein sequence, read N- to C-terminus: uncharacterized protein (157 aa).

One can recognise an N-acetyltransferase domain in the interval 9-146; sequence LLINYKTLDE…GDFYVWHPET (138 aa).

This is an uncharacterized protein from Bacillus anthracis (strain CDC 684 / NRRL 3495).